Reading from the N-terminus, the 396-residue chain is MARAKFLREKLHVNVGTIGHVDHGKTTLTAALTKIGAERFGGEFKAYDAIDAAPEEKARGITISTAHVEYESAVRHYAHVDCPGHADYVKNMITGAAQMDGAILVCSAADGPMPQTREHILLSRQVGVPHIVVFLNKADMVDDAELLELVEMEVRELLSKYDFPGDDTPIIHGSARLALEGDQSDIGVPAILKLVEALDTFIPDPTRDVDRPFLMPVEDVFSISGRGTVVTGRIERGIIKVGDEIEIVGIRDTQKTTVTGVEMFRKLLDQGQAGDNAGLLLRGTKRDDVERGQVLCKPGSIKPHTEFEAEVYVLSKDEGGRHTPFFKGYRPQFYFRTTDITGACQLPEGVEMVMPGDNVKMVVTLINPVAMDEGLRFAIREGGRTVGAGVVAKIIK.

Residues 10–206 enclose the tr-type G domain; the sequence is KLHVNVGTIG…ALDTFIPDPT (197 aa). Residues 19 to 26 are G1; it reads GHVDHGKT. 19–26 is a GTP binding site; it reads GHVDHGKT. A Mg(2+)-binding site is contributed by Thr-26. The tract at residues 60–64 is G2; that stretch reads GITIS. Positions 81-84 are G3; the sequence is DCPG. GTP is bound by residues 81–85 and 136–139; these read DCPGH and NKAD. Positions 136–139 are G4; that stretch reads NKAD. The segment at 174 to 176 is G5; the sequence is SAR.

It belongs to the TRAFAC class translation factor GTPase superfamily. Classic translation factor GTPase family. EF-Tu/EF-1A subfamily. Monomer.

It is found in the cytoplasm. It carries out the reaction GTP + H2O = GDP + phosphate + H(+). Functionally, GTP hydrolase that promotes the GTP-dependent binding of aminoacyl-tRNA to the A-site of ribosomes during protein biosynthesis. The chain is Elongation factor Tu 2 from Xanthomonas campestris pv. campestris (strain 8004).